The sequence spans 299 residues: Junctional adhesion molecule A (299 aa).

An N-terminal signal peptide occupies residues 1 to 27 (MGTKAQVERKLLCLFILAILLCSLALG). 2 Ig-like V-type domains span residues 28 to 125 (SVTV…VKVK) and 135 to 228 (PTVN…NAVR). Residues 28–238 (SVTVHSSEPE…MEAVERNVGV (211 aa)) are Extracellular-facing. Intrachain disulfides connect cysteine 50-cysteine 109 and cysteine 153-cysteine 212. A glycan (N-linked (GlcNAc...) asparagine) is linked at asparagine 185. Residues 239-259 (IVAAVLVTLILLGILVFGIWF) form a helical membrane-spanning segment. The Cytoplasmic segment spans residues 260-299 (AYSRGHFDRTKKGTSSKKVIYSQPSARSEGEFKQTSSFLV). Residues serine 281, serine 284, and serine 287 each carry the phosphoserine modification.

Belongs to the immunoglobulin superfamily. In terms of assembly, interacts with the ninth PDZ domain of MPDZ. Interacts with the first PDZ domain of PARD3. The association between PARD3 and PARD6B probably disrupts this interaction. Interacts with ITGAL (via I-domain). Interacts with CD151. (Microbial infection) Interacts with Mammalian reovirus sigma-1 capsid protein. As to quaternary structure, (Microbial infection) Interacts with Human Rotavirus strain Wa vp4 capsid protein. Post-translationally, N-glycosylated. (Microbial infection) Cleaved by H.pylori virulence factor PqqE. Cleavage leads to altered tight junction functions. Expressed in endothelium, epithelium and leukocytes (at protein level).

Its subcellular location is the cell junction. The protein resides in the tight junction. It is found in the cell membrane. Functionally, seems to play a role in epithelial tight junction formation. Appears early in primordial forms of cell junctions and recruits PARD3. The association of the PARD6-PARD3 complex may prevent the interaction of PARD3 with JAM1, thereby preventing tight junction assembly. Plays a role in regulating monocyte transmigration involved in integrity of epithelial barrier. Ligand for integrin alpha-L/beta-2 involved in memory T-cell and neutrophil transmigration. Involved in platelet activation. (Microbial infection) Acts as a receptor for Mammalian reovirus sigma-1. Its function is as follows. (Microbial infection) Acts as a receptor for Human Rotavirus strain Wa. The chain is Junctional adhesion molecule A (F11R) from Homo sapiens (Human).